An 88-amino-acid polypeptide reads, in one-letter code: Antitoxin VapB3 (88 aa).

In terms of biological role, antitoxin component of a type II toxin-antitoxin (TA) system. This is Antitoxin VapB3 (vapB3) from Mycobacterium tuberculosis (strain CDC 1551 / Oshkosh).